The following is a 545-amino-acid chain: RNA-directed RNA polymerase beta chain (545 aa).

Residues 243 to 373 (RLAQQGSRDG…PNLRKTFTSG (131 aa)) form the RdRp catalytic domain.

Part of the viral RNA-dependent RNA polymerase complex, the other subunits are probably the host ribosomal protein S1, EF-Tu and EF-Ts.

The enzyme catalyses RNA(n) + a ribonucleoside 5'-triphosphate = RNA(n+1) + diphosphate. Functionally, this is the catalytic subunit of the viral RNA-dependent RNA polymerase complex. This complex is involved in viral RNA replication that produces (+)-stranded genomes via a complementary, (-)-stranded intermediate. The polypeptide is RNA-directed RNA polymerase beta chain (Enterobacteria phage fr (Bacteriophage fr)).